A 550-amino-acid polypeptide reads, in one-letter code: Methionine--tRNA ligase (550 aa).

The 'HIGH' region signature appears at Pro13–His23. Residues Cys145, Cys148, Cys158, and Cys161 each coordinate Zn(2+). The 'KMSKS' region signature appears at Gln331–Ser335. An ATP-binding site is contributed by Lys334.

Belongs to the class-I aminoacyl-tRNA synthetase family. MetG type 1 subfamily. As to quaternary structure, monomer. The cofactor is Zn(2+).

The protein localises to the cytoplasm. The catalysed reaction is tRNA(Met) + L-methionine + ATP = L-methionyl-tRNA(Met) + AMP + diphosphate. Its function is as follows. Is required not only for elongation of protein synthesis but also for the initiation of all mRNA translation through initiator tRNA(fMet) aminoacylation. This chain is Methionine--tRNA ligase, found in Chlamydia trachomatis serovar L2b (strain UCH-1/proctitis).